The following is a 247-amino-acid chain: Pulmonary surfactant-associated protein A (247 aa).

Residues 1–19 form the signal peptide; it reads MWCSLALILILVTVSGIMC. An N-linked (GlcNAc...) asparagine glycan is attached at Asn-20. The region spanning 27-99 is the Collagen-like domain; that stretch reads GSPGIPGTPG…PGERGPPGLP (73 aa). 4-hydroxyproline occurs at positions 29, 32, 35, 41, 53, 56, 62, 66, and 69. A disordered region spans residues 32–101; that stretch reads PGTPGSHGLP…ERGPPGLPAS (70 aa). The segment covering 41–50 has biased composition (basic and acidic residues); it reads PGRDGRDGVK. Pro residues predominate over residues 53–64; it reads PGPPGPMGPPGV. A compositionally biased stretch (basic and acidic residues) spans 83–92; that stretch reads ERGDKGDPGE. Positions 131 to 247 constitute a C-type lectin domain; the sequence is LAVGDKVFAT…LQSRLTICEF (117 aa). 2 disulfide bridges follow: Cys-154–Cys-245 and Cys-223–Cys-237. Asn-206 carries an N-linked (GlcNAc...) asparagine glycan. Positions 214, 216, 233, and 234 each coordinate Ca(2+).

This sequence belongs to the SFTPA family. As to quaternary structure, oligomeric complex of 6 set of homotrimers.

It localises to the secreted. The protein resides in the extracellular space. The protein localises to the extracellular matrix. It is found in the surface film. In terms of biological role, in presence of calcium ions, it binds to surfactant phospholipids and contributes to lower the surface tension at the air-liquid interface in the alveoli of the mammalian lung and is essential for normal respiration. Enhances the expression of MYO18A/SP-R210 on alveolar macrophages. The sequence is that of Pulmonary surfactant-associated protein A (SFTPA1) from Cavia porcellus (Guinea pig).